Consider the following 173-residue polypeptide: Signal peptidase complex catalytic subunit sec11 (173 aa).

Residues 1-15 (MLGIADMQPRQLAAQ) are Cytoplasmic-facing. The chain crosses the membrane as a helical; Signal-anchor for type II membrane protein span at residues 16–36 (ILNFALVLSTAFMMWKGLSVV). At 37-173 (SDSPSPIVVV…MGVMVVLQRE (137 aa)) the chain is on the lumenal side. Active-site charge relay system residues include Ser50, His89, and Asp115. The tract at residues 159-170 (VMLGLMGVMVVL) is C-terminal short (CTS) helix.

The protein belongs to the peptidase S26B family. Component of the signal peptidase complex (SPC) composed of a catalytic subunit SEC11 and three accessory subunits SPC1, SPC2 and SPC3. The complex induces a local thinning of the ER membrane which is used to measure the length of the signal peptide (SP) h-region of protein substrates. This ensures the selectivity of the complex towards h-regions shorter than 18-20 amino acids. SPC associates with the translocon complex.

It is found in the endoplasmic reticulum membrane. It carries out the reaction Cleavage of hydrophobic, N-terminal signal or leader sequences from secreted and periplasmic proteins.. Its function is as follows. Catalytic component of the signal peptidase complex (SPC) which catalyzes the cleavage of N-terminal signal sequences from nascent proteins as they are translocated into the lumen of the endoplasmic reticulum. Specifically cleaves N-terminal signal peptides that contain a hydrophobic alpha-helix (h-region) shorter than 18-20 amino acids. This is Signal peptidase complex catalytic subunit sec11 (sec11) from Pyrenophora tritici-repentis (strain Pt-1C-BFP) (Wheat tan spot fungus).